The sequence spans 157 residues: Phosphopantetheine adenylyltransferase (157 aa).

S8 is a binding site for substrate. Residues 8 to 9 and H16 contribute to the ATP site; that span reads SF. Residues K40, T72, and R86 each coordinate substrate. ATP-binding positions include 87 to 89, E97, and 122 to 128; these read GLR and HSFLSSS.

Belongs to the bacterial CoaD family. In terms of assembly, homohexamer. It depends on Mg(2+) as a cofactor.

Its subcellular location is the cytoplasm. The catalysed reaction is (R)-4'-phosphopantetheine + ATP + H(+) = 3'-dephospho-CoA + diphosphate. It participates in cofactor biosynthesis; coenzyme A biosynthesis; CoA from (R)-pantothenate: step 4/5. Its function is as follows. Reversibly transfers an adenylyl group from ATP to 4'-phosphopantetheine, yielding dephospho-CoA (dPCoA) and pyrophosphate. This Prochlorococcus marinus (strain MIT 9313) protein is Phosphopantetheine adenylyltransferase.